Consider the following 178-residue polypeptide: uncharacterized protein (178 aa).

A helical transmembrane segment spans residues 7–27 (LAIGTAILLIGMAYWTVSIVE).

It is found in the membrane. This is an uncharacterized protein from Methanocaldococcus jannaschii (strain ATCC 43067 / DSM 2661 / JAL-1 / JCM 10045 / NBRC 100440) (Methanococcus jannaschii).